The chain runs to 559 residues: CRISPR-associated exonuclease Cas4/endonuclease Cas1 fusion (559 aa).

The tract at residues 1-198 (MAETDGSIPL…RCSLVGICLP (198 aa)) is CRISPR-associated exonuclease Cas4. [4Fe-4S] cluster is bound at residue Cys22. The Mn(2+) site is built by Asp87 and Asp100. [4Fe-4S] cluster contacts are provided by Cys187, Cys190, and Cys196. A CRISPR-associated endonuclease Cas1 region spans residues 224–559 (LYVQSPKAYV…IPAYPNFVTR (336 aa)). Mn(2+)-binding residues include Glu380, His451, and Glu466.

This sequence in the N-terminal section; belongs to the CRISPR-associated exonuclease Cas4 family. In the C-terminal section; belongs to the CRISPR-associated endonuclease Cas1 family. In terms of assembly, homodimer, forms a heterotetramer with a Cas2 homodimer. Requires [4Fe-4S] cluster as cofactor. Mg(2+) is required as a cofactor. The cofactor is Mn(2+).

It catalyses the reaction exonucleolytic cleavage in the 5'- to 3'-direction to yield nucleoside 3'-phosphates.. CRISPR (clustered regularly interspaced short palindromic repeat), is an adaptive immune system that provides protection against mobile genetic elements (viruses, transposable elements and conjugative plasmids). CRISPR clusters contain spacers, sequences complementary to antecedent mobile elements, and target invading nucleic acids. CRISPR clusters are transcribed and processed into CRISPR RNA (crRNA). The Cas4 region acts as a ssDNA exonuclease, while the Cas1 region acts as a dsDNA endonuclease. Involved in the integration of spacer DNA into the CRISPR cassette. The sequence is that of CRISPR-associated exonuclease Cas4/endonuclease Cas1 fusion (cas4-cas1) from Geobacter sulfurreducens (strain ATCC 51573 / DSM 12127 / PCA).